A 34-amino-acid polypeptide reads, in one-letter code: Photosystem II reaction center protein M (34 aa).

The helical transmembrane segment at 5-25 (ILAFSATALLILFPTALLLIL) threads the bilayer.

It belongs to the PsbM family. In terms of assembly, PSII is composed of 1 copy each of membrane proteins PsbA, PsbB, PsbC, PsbD, PsbE, PsbF, PsbH, PsbI, PsbJ, PsbK, PsbL, PsbM, PsbT, PsbX, PsbY, PsbZ, Psb30/Ycf12, at least 3 peripheral proteins of the oxygen-evolving complex and a large number of cofactors. It forms dimeric complexes.

The protein resides in the plastid membrane. In terms of biological role, one of the components of the core complex of photosystem II (PSII). PSII is a light-driven water:plastoquinone oxidoreductase that uses light energy to abstract electrons from H(2)O, generating O(2) and a proton gradient subsequently used for ATP formation. It consists of a core antenna complex that captures photons, and an electron transfer chain that converts photonic excitation into a charge separation. This subunit is found at the monomer-monomer interface. The sequence is that of Photosystem II reaction center protein M from Cuscuta gronovii (Common dodder).